Here is an 893-residue protein sequence, read N- to C-terminus: Alanine--tRNA ligase (893 aa).

Zn(2+)-binding residues include His574, His578, Cys678, and His682.

This sequence belongs to the class-II aminoacyl-tRNA synthetase family. Zn(2+) serves as cofactor.

It localises to the cytoplasm. It carries out the reaction tRNA(Ala) + L-alanine + ATP = L-alanyl-tRNA(Ala) + AMP + diphosphate. In terms of biological role, catalyzes the attachment of alanine to tRNA(Ala) in a two-step reaction: alanine is first activated by ATP to form Ala-AMP and then transferred to the acceptor end of tRNA(Ala). Also edits incorrectly charged Ser-tRNA(Ala) and Gly-tRNA(Ala) via its editing domain. This Bifidobacterium longum (strain NCC 2705) protein is Alanine--tRNA ligase.